Reading from the N-terminus, the 482-residue chain is Membrane-bound lytic murein transglycosylase F (482 aa).

The first 13 residues, 1 to 13 (MKGLFLRIITALA), serve as a signal peptide directing secretion. The tract at residues 14–267 (LLFWAIDMVF…NLKEKYLGHI (254 aa)) is non-LT domain. Positions 268–482 (SQFDYVDTRS…NLEEIKENKD (215 aa)) are LT domain. Residue E312 is part of the active site.

This sequence in the N-terminal section; belongs to the bacterial solute-binding protein 3 family. In the C-terminal section; belongs to the transglycosylase Slt family.

It localises to the cell outer membrane. It catalyses the reaction Exolytic cleavage of the (1-&gt;4)-beta-glycosidic linkage between N-acetylmuramic acid (MurNAc) and N-acetylglucosamine (GlcNAc) residues in peptidoglycan, from either the reducing or the non-reducing ends of the peptidoglycan chains, with concomitant formation of a 1,6-anhydrobond in the MurNAc residue.. Functionally, murein-degrading enzyme that degrades murein glycan strands and insoluble, high-molecular weight murein sacculi, with the concomitant formation of a 1,6-anhydromuramoyl product. Lytic transglycosylases (LTs) play an integral role in the metabolism of the peptidoglycan (PG) sacculus. Their lytic action creates space within the PG sacculus to allow for its expansion as well as for the insertion of various structures such as secretion systems and flagella. The sequence is that of Membrane-bound lytic murein transglycosylase F from Haemophilus influenzae (strain PittEE).